The following is a 345-amino-acid chain: Phosphate acyltransferase (345 aa).

It belongs to the PlsX family. Homodimer. Probably interacts with PlsY.

It localises to the cytoplasm. The enzyme catalyses a fatty acyl-[ACP] + phosphate = an acyl phosphate + holo-[ACP]. The protein operates within lipid metabolism; phospholipid metabolism. Its function is as follows. Catalyzes the reversible formation of acyl-phosphate (acyl-PO(4)) from acyl-[acyl-carrier-protein] (acyl-ACP). This enzyme utilizes acyl-ACP as fatty acyl donor, but not acyl-CoA. This Thermodesulfovibrio yellowstonii (strain ATCC 51303 / DSM 11347 / YP87) protein is Phosphate acyltransferase.